Here is a 962-residue protein sequence, read N- to C-terminus: Glycine dehydrogenase (decarboxylating) (962 aa).

The residue at position 709 (Lys709) is an N6-(pyridoxal phosphate)lysine.

It belongs to the GcvP family. The glycine cleavage system is composed of four proteins: P, T, L and H. It depends on pyridoxal 5'-phosphate as a cofactor.

It catalyses the reaction N(6)-[(R)-lipoyl]-L-lysyl-[glycine-cleavage complex H protein] + glycine + H(+) = N(6)-[(R)-S(8)-aminomethyldihydrolipoyl]-L-lysyl-[glycine-cleavage complex H protein] + CO2. The glycine cleavage system catalyzes the degradation of glycine. The P protein binds the alpha-amino group of glycine through its pyridoxal phosphate cofactor; CO(2) is released and the remaining methylamine moiety is then transferred to the lipoamide cofactor of the H protein. The polypeptide is Glycine dehydrogenase (decarboxylating) (Shewanella baltica (strain OS223)).